The sequence spans 245 residues: Eukaryotic translation initiation factor 6-2 (245 aa).

Belongs to the eIF-6 family. Monomer. Associates with the 60S ribosomal subunit.

It is found in the cytoplasm. Its subcellular location is the nucleus. It localises to the nucleolus. In terms of biological role, binds to the 60S ribosomal subunit and prevents its association with the 40S ribosomal subunit to form the 80S initiation complex in the cytoplasm. May also be involved in ribosome biogenesis. The chain is Eukaryotic translation initiation factor 6-2 from Arabidopsis thaliana (Mouse-ear cress).